A 225-amino-acid chain; its full sequence is Holliday junction branch migration complex subunit RuvA (225 aa).

The domain I stretch occupies residues 1–71 (MISWINGELV…EDSDLLFGFT (71 aa)). Residues 72 to 150 (SKDQKFFFIE…SKIQIEEEKG (79 aa)) form a domain II region. The segment at 151 to 161 (QEEFEITNPEI) is flexible linker. The interval 161 to 225 (IYKLMEDLQL…LDQGNSNLAR (65 aa)) is domain III.

This sequence belongs to the RuvA family. In terms of assembly, homotetramer. Forms an RuvA(8)-RuvB(12)-Holliday junction (HJ) complex. HJ DNA is sandwiched between 2 RuvA tetramers; dsDNA enters through RuvA and exits via RuvB. An RuvB hexamer assembles on each DNA strand where it exits the tetramer. Each RuvB hexamer is contacted by two RuvA subunits (via domain III) on 2 adjacent RuvB subunits; this complex drives branch migration. In the full resolvosome a probable DNA-RuvA(4)-RuvB(12)-RuvC(2) complex forms which resolves the HJ.

It is found in the cytoplasm. The RuvA-RuvB-RuvC complex processes Holliday junction (HJ) DNA during genetic recombination and DNA repair, while the RuvA-RuvB complex plays an important role in the rescue of blocked DNA replication forks via replication fork reversal (RFR). RuvA specifically binds to HJ cruciform DNA, conferring on it an open structure. The RuvB hexamer acts as an ATP-dependent pump, pulling dsDNA into and through the RuvAB complex. HJ branch migration allows RuvC to scan DNA until it finds its consensus sequence, where it cleaves and resolves the cruciform DNA. This is Holliday junction branch migration complex subunit RuvA from Prochlorococcus marinus (strain MIT 9215).